We begin with the raw amino-acid sequence, 87 residues long: Small ribosomal subunit protein bS20 (87 aa).

Positions 1–27 are enriched in basic residues; it reads MANIKSAKKRALQSERRRQHNASRRSM. Positions 1 to 31 are disordered; that stretch reads MANIKSAKKRALQSERRRQHNASRRSMTRTS.

The protein belongs to the bacterial ribosomal protein bS20 family.

Functionally, binds directly to 16S ribosomal RNA. The sequence is that of Small ribosomal subunit protein bS20 from Pseudoalteromonas atlantica (strain T6c / ATCC BAA-1087).